The primary structure comprises 138 residues: Transcription factor Atoh7-b (138 aa).

The bHLH domain occupies 33–85 (KRRLAANARERRRMQGLNTAFDSLRKVVPQWGEDKKLSKYETLQMALSYIMAL).

The protein localises to the nucleus. It localises to the perikaryon. The protein resides in the cell projection. Its subcellular location is the axon. Transcription factor that binds to DNA at the consensus sequence 5'-CAG[GC]TG-3'. Positively regulates the determination of retinal ganglion cell fate and formation of the optic nerve and retino-hypothalamic tract. Required for retinal circadian rhythm photoentrainment. Plays a role in brainstem auditory signaling and binaural processing. Regulates the differentiation of olfactory receptor neurons. During retinal neurogenesis, activates the transcription of several genes such as brn3d, coe3, cbfa2t2, glis2, elrC and xgadd45-gamma. The sequence is that of Transcription factor Atoh7-b from Xenopus laevis (African clawed frog).